Consider the following 553-residue polypeptide: Undecaprenyl phosphate-alpha-4-amino-4-deoxy-L-arabinose arabinosyl transferase (553 aa).

Transmembrane regions (helical) follow at residues 8–28 (LVLLLGFTLLYLLPLEFRALW), 83–103 (VRFGAVFSTTLSALMVAWLAF), 111–131 (VAVLSGVIFLTCLLVYGVGTY), 132–152 (AVLDPMITLWLVAAMCSFWLG), 176–196 (VMTKGFLALAVPVLGVLPWVI), 204–224 (VLLFGPLAIISATLITLPWAL), 255–275 (APFWYYIPFLIAGCLPWVALL), 288–308 (IESGTLYLLGWVVMPLLFFSI), 317–337 (ILPCFAPLAILLARHATQLVA), 350–370 (TVFGAVCALIVLLVLAPWGIA), 380–400 (VLKVIQASIAFLVWALVGYLT), and 407–427 (LWQWAALCPLGIALLVGGMIP).

Belongs to the glycosyltransferase 83 family.

It is found in the cell inner membrane. The catalysed reaction is 4-amino-4-deoxy-alpha-L-arabinopyranosyl di-trans,octa-cis-undecaprenyl phosphate + lipid IVA = lipid IIA + di-trans,octa-cis-undecaprenyl phosphate.. It participates in lipopolysaccharide metabolism; 4-amino-4-deoxy-beta-L-arabinose-lipid A biosynthesis. In terms of biological role, catalyzes the transfer of the L-Ara4N moiety of the glycolipid undecaprenyl phosphate-alpha-L-Ara4N to lipid A. The modified arabinose is attached to lipid A and is required for resistance to polymyxin and cationic antimicrobial peptides. This Enterobacter sp. (strain 638) protein is Undecaprenyl phosphate-alpha-4-amino-4-deoxy-L-arabinose arabinosyl transferase.